Here is a 69-residue protein sequence, read N- to C-terminus: Sec-independent protein translocase protein TatA (69 aa).

A helical membrane pass occupies residues 1–21 (MFGLGGQELILILLIILLLFG).

The protein belongs to the TatA/E family. As to quaternary structure, forms a complex with TatC.

Its subcellular location is the cell inner membrane. Its function is as follows. Part of the twin-arginine translocation (Tat) system that transports large folded proteins containing a characteristic twin-arginine motif in their signal peptide across membranes. TatA could form the protein-conducting channel of the Tat system. This is Sec-independent protein translocase protein TatA from Pelodictyon phaeoclathratiforme (strain DSM 5477 / BU-1).